The primary structure comprises 125 residues: Histone H2A (125 aa).

Residues 1-18 (MSGRGKGGKVKAKAKSRS) are compositionally biased toward basic residues. The tract at residues 1-21 (MSGRGKGGKVKAKAKSRSSRA) is disordered. S2 carries the post-translational modification N-acetylserine. S2 is subject to Phosphoserine. K119 is covalently cross-linked (Glycyl lysine isopeptide (Lys-Gly) (interchain with G-Cter in ubiquitin)).

The protein belongs to the histone H2A family. In terms of assembly, the nucleosome is a histone octamer containing two molecules each of H2A, H2B, H3 and H4 assembled in one H3-H4 heterotetramer and two H2A-H2B heterodimers. The octamer wraps approximately 147 bp of DNA. Post-translationally, monoubiquitination of Lys-119 gives a specific tag for epigenetic transcriptional repression. In terms of processing, phosphorylation on Ser-2 is enhanced during mitosis. Phosphorylation on Ser-2 directly represses transcription.

Its subcellular location is the nucleus. The protein resides in the chromosome. Functionally, core component of nucleosome. Nucleosomes wrap and compact DNA into chromatin, limiting DNA accessibility to the cellular machineries which require DNA as a template. Histones thereby play a central role in transcription regulation, DNA repair, DNA replication and chromosomal stability. DNA accessibility is regulated via a complex set of post-translational modifications of histones, also called histone code, and nucleosome remodeling. The polypeptide is Histone H2A (Chironomus thummi thummi (Midge)).